A 994-amino-acid polypeptide reads, in one-letter code: Phosphoenolpyruvate carboxylase (994 aa).

The disordered stretch occupies residues 1-66 (MKSSGSARAT…QGRTREDKDR (66 aa)). Low complexity-rich tracts occupy residues 14–25 (AVSSSSAPAHAE) and 41–54 (AAAR…AASA). Active-site residues include histidine 204 and lysine 646.

It belongs to the PEPCase type 1 family. It depends on Mg(2+) as a cofactor.

It carries out the reaction oxaloacetate + phosphate = phosphoenolpyruvate + hydrogencarbonate. Functionally, forms oxaloacetate, a four-carbon dicarboxylic acid source for the tricarboxylic acid cycle. The chain is Phosphoenolpyruvate carboxylase from Burkholderia mallei (strain NCTC 10247).